Reading from the N-terminus, the 156-residue chain is Ribosomal RNA large subunit methyltransferase H (156 aa).

S-adenosyl-L-methionine is bound by residues Gly-104 and 123–128; that span reads LSPMVM.

It belongs to the RNA methyltransferase RlmH family. Homodimer.

The protein localises to the cytoplasm. It carries out the reaction pseudouridine(1915) in 23S rRNA + S-adenosyl-L-methionine = N(3)-methylpseudouridine(1915) in 23S rRNA + S-adenosyl-L-homocysteine + H(+). Functionally, specifically methylates the pseudouridine at position 1915 (m3Psi1915) in 23S rRNA. In Bdellovibrio bacteriovorus (strain ATCC 15356 / DSM 50701 / NCIMB 9529 / HD100), this protein is Ribosomal RNA large subunit methyltransferase H.